The chain runs to 683 residues: DNA ligase (683 aa).

Residues 36–40, 85–86, and Glu-119 each bind NAD(+); these read DAEYD and SL. Catalysis depends on Lys-121, which acts as the N6-AMP-lysine intermediate. NAD(+) contacts are provided by Arg-142, Glu-179, Lys-295, and Lys-319. Positions 413, 416, 431, and 437 each coordinate Zn(2+). Residues 596–683 enclose the BRCT domain; sequence TETLPLSGQT…EHQAHLGGEA (88 aa).

It belongs to the NAD-dependent DNA ligase family. LigA subfamily. It depends on Mg(2+) as a cofactor. Mn(2+) is required as a cofactor.

The catalysed reaction is NAD(+) + (deoxyribonucleotide)n-3'-hydroxyl + 5'-phospho-(deoxyribonucleotide)m = (deoxyribonucleotide)n+m + AMP + beta-nicotinamide D-nucleotide.. In terms of biological role, DNA ligase that catalyzes the formation of phosphodiester linkages between 5'-phosphoryl and 3'-hydroxyl groups in double-stranded DNA using NAD as a coenzyme and as the energy source for the reaction. It is essential for DNA replication and repair of damaged DNA. The protein is DNA ligase of Hahella chejuensis (strain KCTC 2396).